Reading from the N-terminus, the 413-residue chain is Coiled-coil domain-containing protein 83 (413 aa).

Coiled coils occupy residues 32–186 (HCQI…RIIR) and 215–255 (IWEN…QLFN).

In Bos taurus (Bovine), this protein is Coiled-coil domain-containing protein 83 (CCDC83).